Consider the following 151-residue polypeptide: Transcriptional regulator MraZ (151 aa).

2 SpoVT-AbrB domains span residues 5 to 52 (ANAI…PLPE) and 81 to 124 (AVDL…DEDA).

Belongs to the MraZ family. In terms of assembly, forms oligomers.

The protein resides in the cytoplasm. It localises to the nucleoid. This Pseudomonas aeruginosa (strain LESB58) protein is Transcriptional regulator MraZ.